The chain runs to 461 residues: Glycerol-3-phosphate acyltransferase, chloroplastic (461 aa).

The transit peptide at 1–96 (MSMTGSSAYY…SPPNMSASVS (96 aa)) directs the protein to the chloroplast. Residues 47–76 (LLSSTSSSSSSSISLRSSTAPSPSCSSVTP) are compositionally biased toward low complexity. A disordered region spans residues 47–88 (LLSSTSSSSSSSISLRSSTAPSPSCSSVTPKDNCLASAKHSP). Residues 231 to 236 (HQTEAD) carry the HXXXXD motif motif.

It belongs to the GPAT/DAPAT family.

The protein resides in the plastid. The protein localises to the chloroplast stroma. It catalyses the reaction sn-glycerol 3-phosphate + an acyl-CoA = a 1-acyl-sn-glycero-3-phosphate + CoA. Its pathway is phospholipid metabolism; CDP-diacylglycerol biosynthesis; CDP-diacylglycerol from sn-glycerol 3-phosphate: step 1/3. Its function is as follows. Esterifies acyl-group from acyl-ACP to the sn-1 position of glycerol-3-phosphate. The enzyme from chilling-resistant plants discriminates against non-fluid palmitic acid and selects oleic acid whereas the enzyme from sensitive plants accepts both fatty acids. The protein is Glycerol-3-phosphate acyltransferase, chloroplastic (PLSB) of Phaseolus vulgaris (Kidney bean).